A 311-amino-acid polypeptide reads, in one-letter code: Olfactory receptor 10G8 (311 aa).

Residues 1 to 23 are Extracellular-facing; that stretch reads MSNASLLTAFILMGLPHAPALDA. N3 is a glycosylation site (N-linked (GlcNAc...) asparagine). Residues 24–44 form a helical membrane-spanning segment; that stretch reads PLFGVFLVVYVLTVLGNLLIL. The Cytoplasmic portion of the chain corresponds to 45–52; the sequence is LVIRVDSH. A helical membrane pass occupies residues 53 to 73; the sequence is LHTTMYYFLTNLSFIDMWFST. Residues 74–98 are Extracellular-facing; the sequence is VTVPKLLMTLVFPSGRAISFHSCMA. A disulfide bridge connects residues C96 and C188. A helical transmembrane segment spans residues 99–119; it reads QLYFFHFLGGTECFLYRVMSC. Over 120–138 the chain is Cytoplasmic; that stretch reads DRYLAISYPLRYTSMMTGR. Residues 139–159 form a helical membrane-spanning segment; it reads SCTLLATSTWLSGSLHSAVQA. Topologically, residues 160-196 are extracellular; it reads ILTFHLPYCGPNWIQHYLCDAPPILKLACADTSAIET. The chain crosses the membrane as a helical span at residues 197 to 216; it reads VIFVTVGIVASGCFVLIVLS. The Cytoplasmic segment spans residues 217–236; the sequence is YVSIVCSILRIRTSEGKHRA. The helical transmembrane segment at 237 to 257 threads the bilayer; sequence FQTCASHCIVVLCFFGPGLFI. The Extracellular segment spans residues 258–268; it reads YLRPGSRKAVD. A helical membrane pass occupies residues 269 to 289; sequence GVVAVFYTVLTPLLNPVVYTL. At 290 to 311 the chain is on the cytoplasmic side; that stretch reads RNKEVKKALLKLKDKVAHSQSK.

This sequence belongs to the G-protein coupled receptor 1 family.

The protein localises to the cell membrane. Odorant receptor. In Homo sapiens (Human), this protein is Olfactory receptor 10G8 (OR10G8).